The following is a 486-amino-acid chain: Histamine H1 receptor (486 aa).

Topologically, residues 1–29 (MSFANTSSTFEDKMCEGNRTAMASPQLLP) are extracellular. 2 N-linked (GlcNAc...) asparagine glycosylation sites follow: Asn5 and Asn18. Residues 30 to 50 (LVVVLSSISLVTVGLNLLVLY) traverse the membrane as a helical segment. Residues 51–64 (AVHSERKLHTVGNL) lie on the Cytoplasmic side of the membrane. Residues 65 to 89 (YIVSLSVADLIVGAVVMPMNILYLI) form a helical membrane-spanning segment. Residues 90–97 (MTKWSLGR) lie on the Extracellular side of the membrane. The helical transmembrane segment at 98-123 (PLCLFWLSMDYVASTASIFSVFILCI) threads the bilayer. A disulfide bridge links Cys100 with Cys180. Residues Asp107 and Thr112 each contribute to the histamine site. An important for agonist binding region spans residues 107-112 (DYVAST). Topologically, residues 124–144 (DRYRSVQQPLRYLRYRTKTRA) are cytoplasmic. Thr140 and Thr142 each carry phosphothreonine. A helical membrane pass occupies residues 145-164 (SATILGAWFFSFLWVIPILG). At 165 to 188 (WHHFMPPAPELREDKCETDFYNVT) the chain is on the extracellular side. The helical transmembrane segment at 189 to 211 (WFKIMTAIINFYLPTLLMLWFYV) threads the bilayer. Asn198 lines the histamine pocket. Topologically, residues 212-415 (KIYKAVRRHC…LNRERKAAKQ (204 aa)) are cytoplasmic. At Ser230 the chain carries Phosphoserine. Residues 241-253 (SDDTKEGAKKPGR) show a composition bias toward basic and acidic residues. Disordered stretches follow at residues 241–295 (SDDT…GERE) and 310–379 (VAEG…RSGS). Phosphoserine is present on residues Ser342 and Ser345. Positions 347 to 365 (DQTLVDQQSFSRTTDSDTS) are enriched in polar residues. Residues Ser379, Ser381, Ser395, and Ser397 each carry the phosphoserine modification. Residues 416–439 (LGFIMAAFILCWIPYFIFFMVIAF) form a helical membrane-spanning segment. The important for agonist binding stretch occupies residues 423–427 (FILCW). Tyr430 serves as a coordination point for histamine. A disulfide bridge connects residues Cys440 and Cys443. Over 440 to 445 (CKSCCS) the chain is Extracellular. A helical membrane pass occupies residues 446 to 468 (EPMHMFTIWLGYINSTLNPLIYP). The Cytoplasmic segment spans residues 469-486 (LCNENFKKTFKKILHIRS).

It belongs to the G-protein coupled receptor 1 family. Phosphorylation at sites in the second and third cytoplasmic loops independently contribute to agonist-induced receptor down-regulation.

The protein localises to the cell membrane. Functionally, G-protein-coupled receptor for histamine, a biogenic amine that functions as an immune modulator and a neurotransmitter. Through the H1 receptor, histamine mediates the contraction of smooth muscles and increases capillary permeability due to contraction of terminal venules. Also mediates neurotransmission in the central nervous system and thereby regulates circadian rhythms, emotional and locomotor activities as well as cognitive functions. In Rattus norvegicus (Rat), this protein is Histamine H1 receptor.